Consider the following 148-residue polypeptide: Large ribosomal subunit protein uL15B (148 aa).

2 stretches are compositionally biased toward basic residues: residues 1-13 (MPTH…KLRG) and 21-31 (RIGKHRKHPGG). Residues 1–38 (MPTHTSKTRKLRGHVSAGHGRIGKHRKHPGGRGKAGGL) are disordered. Tyr108 is modified (phosphotyrosine).

The protein belongs to the universal ribosomal protein uL15 family. In terms of assembly, component of the large ribosomal subunit (LSU). Mature yeast ribosomes consist of a small (40S) and a large (60S) subunit. The 40S small subunit contains 1 molecule of ribosomal RNA (18S rRNA) and at least 33 different proteins. The large 60S subunit contains 3 rRNA molecules (25S, 5.8S and 5S rRNA) and at least 46 different proteins.

The protein resides in the cytoplasm. It localises to the nucleus. Its subcellular location is the nucleolus. Functionally, component of the ribosome, a large ribonucleoprotein complex responsible for the synthesis of proteins in the cell. The small ribosomal subunit (SSU) binds messenger RNAs (mRNAs) and translates the encoded message by selecting cognate aminoacyl-transfer RNA (tRNA) molecules. The large subunit (LSU) contains the ribosomal catalytic site termed the peptidyl transferase center (PTC), which catalyzes the formation of peptide bonds, thereby polymerizing the amino acids delivered by tRNAs into a polypeptide chain. The nascent polypeptides leave the ribosome through a tunnel in the LSU and interact with protein factors that function in enzymatic processing, targeting, and the membrane insertion of nascent chains at the exit of the ribosomal tunnel. The polypeptide is Large ribosomal subunit protein uL15B (rpl2801) (Schizosaccharomyces pombe (strain 972 / ATCC 24843) (Fission yeast)).